The sequence spans 278 residues: Adenylate kinase (278 aa).

50–55 (GAGKGT) contacts ATP. The segment at 70–99 (ATGDMLRAQVAKGTALGKQAKKIMNEGGLV) is NMP. Residues T71, R76, 97–99 (GLV), 126–129 (GFPR), and Q133 each bind AMP. The LID stretch occupies residues 167-204 (GRLVHPASGRSYHRIFNPPKDDMKDDITGEPLVQRSDD). ATP-binding positions include R168 and 177–178 (SY). Residues R201 and R212 each contribute to the AMP site. Q240 is an ATP binding site.

This sequence belongs to the adenylate kinase family. AK2 subfamily. Monomer.

The protein resides in the cytoplasm. It is found in the cytosol. The protein localises to the mitochondrion intermembrane space. The enzyme catalyses AMP + ATP = 2 ADP. Its function is as follows. Catalyzes the reversible transfer of the terminal phosphate group between ATP and AMP. Plays an important role in cellular energy homeostasis and in adenine nucleotide metabolism. Adenylate kinase activity is critical for regulation of the phosphate utilization and the AMP de novo biosynthesis pathways. The polypeptide is Adenylate kinase (adk-1) (Neurospora crassa (strain ATCC 24698 / 74-OR23-1A / CBS 708.71 / DSM 1257 / FGSC 987)).